The chain runs to 606 residues: MAVARKIRTLLTVNILVFVGIVLFSVYCRLQGRSQELVRPLSGGCRPRPATPAPGSPLRSGGPRAVVAGRAELVLKGQLPAEPCSPGRLMVPEAEAEAQGGLAATLRDDGQEAEGKYEEYGYNAQLSDRISLDRSIPDYRPRKCRHMSYAQDLPQVSVVFIFVNEALSVILRSVHSVVNHTPSQLLKEVILVDDNSDNVELKFNLDQYVNKRYPGLVKIVRNSRREGLIRARLQGWKAATAPVVGFFDAHVEFNTGWAEPALSRIREDRRRIVLPAIDNIKYSTFEVQQYANAAHGYNWGLWCMYIIPPQDWLDRGDESAPIRTPAMIGCSFVVDREYFGDIGLLDPGMEVYGGENVELGMRVWQCGGSMEVLPCSRVAHIERTRKPYNNDIDYYAKRNALRAAEVWMDDFKSHVYMAWNIPMTNPGVDFGDVSERLALRQRLKCRSFKWYLENVYPEMRIYNNTLTYGEVRNSKASGYCLDQGAEDGDRAILYPCHGMSSQLVRYSADGLLQLGPLGSTAFLPDSKCLVDDGRGRTPTLRKCEDVARPTQRLWDFTQSGPIVSRATGRCLEVEMSKDANFGLRLVVQRCSGQKWMIRNWIKHARH.

At 1–6 the chain is on the cytoplasmic side; the sequence is MAVARK. A helical; Signal-anchor for type II membrane protein transmembrane segment spans residues 7-29; sequence IRTLLTVNILVFVGIVLFSVYCR. The Lumenal segment spans residues 30–606; the sequence is LQGRSQELVR…IRNWIKHARH (577 aa). Residues 43 to 62 are disordered; that stretch reads GGCRPRPATPAPGSPLRSGG. 2 disulfides stabilise this stretch: Cys144/Cys375 and Cys366/Cys445. The tract at residues 153–264 is catalytic subdomain A; the sequence is LPQVSVVFIF…TGWAEPALSR (112 aa). The substrate site is built by Asp194 and Arg225. Positions 248, 250, and 380 each coordinate Mn(2+). A catalytic subdomain B region spans residues 321-383; the sequence is PIRTPAMIGC…PCSRVAHIER (63 aa). Residues Arg383 and Tyr388 each contribute to the substrate site. A glycan (N-linked (GlcNAc...) asparagine) is linked at Asn463. Positions 467 to 603 constitute a Ricin B-type lectin domain; sequence TYGEVRNSKA…KWMIRNWIKH (137 aa). 3 cysteine pairs are disulfide-bonded: Cys480/Cys496, Cys528/Cys543, and Cys570/Cys590.

Belongs to the glycosyltransferase 2 family. GalNAc-T subfamily. The cofactor is Mn(2+).

It is found in the golgi apparatus membrane. The catalysed reaction is L-seryl-[protein] + UDP-N-acetyl-alpha-D-galactosamine = a 3-O-[N-acetyl-alpha-D-galactosaminyl]-L-seryl-[protein] + UDP + H(+). It catalyses the reaction L-threonyl-[protein] + UDP-N-acetyl-alpha-D-galactosamine = a 3-O-[N-acetyl-alpha-D-galactosaminyl]-L-threonyl-[protein] + UDP + H(+). It functions in the pathway protein modification; protein glycosylation. Its function is as follows. Catalyzes the initial reaction in O-linked oligosaccharide biosynthesis, the transfer of an N-acetyl-D-galactosamine residue to a serine or threonine residue on the protein receptor. Does not glycosylate apomucin or SDC3. In Macaca fascicularis (Crab-eating macaque), this protein is Polypeptide N-acetylgalactosaminyltransferase 9 (GALNT9).